Consider the following 313-residue polypeptide: GTP cyclohydrolase MptA (313 aa).

It belongs to the GTP cyclohydrolase IV family. Homodimer. It depends on Fe(2+) as a cofactor.

It carries out the reaction GTP + H2O = 7,8-dihydroneopterin 2',3'-cyclic phosphate + formate + diphosphate + H(+). It functions in the pathway cofactor biosynthesis; 5,6,7,8-tetrahydromethanopterin biosynthesis. Its function is as follows. Converts GTP to 7,8-dihydro-D-neopterin 2',3'-cyclic phosphate, the first intermediate in the biosynthesis of coenzyme methanopterin. In Methanoculleus marisnigri (strain ATCC 35101 / DSM 1498 / JR1), this protein is GTP cyclohydrolase MptA.